The chain runs to 193 residues: Ion-translocating oxidoreductase complex subunit A (193 aa).

Transmembrane regions (helical) follow at residues Leu5–Leu25, Phe47–Leu67, Leu72–Val92, Leu102–Leu122, Ala134–Ile154, and Ala171–Val191.

This sequence belongs to the NqrDE/RnfAE family. The complex is composed of six subunits: RsxA, RsxB, RsxC, RsxD, RsxE and RsxG.

Its subcellular location is the cell inner membrane. In terms of biological role, part of a membrane-bound complex that couples electron transfer with translocation of ions across the membrane. Required to maintain the reduced state of SoxR. This is Ion-translocating oxidoreductase complex subunit A from Salmonella agona (strain SL483).